Reading from the N-terminus, the 282-residue chain is Dof zinc finger protein 4 (282 aa).

A Dof-type zinc finger spans residues 45 to 99 (VKCPRCESTNTKFCYYNNYNLSQPRHFCKSCRRYWTKGGVLRNVPVGGGCRKTKR). Residues Cys47, Cys50, Cys72, and Cys75 each coordinate Zn(2+). The tract at residues 89–161 (PVGGGCRKTK…TTPATPSSNT (73 aa)) is disordered. Low complexity-rich tracts occupy residues 102–117 (SSSA…TAAT) and 125–161 (RASA…SSNT).

Its subcellular location is the nucleus. Its function is as follows. Transcription factor that may transactivate seed storage protein genes in developing seeds. The protein is Dof zinc finger protein 4 of Oryza sativa subsp. japonica (Rice).